Here is a 546-residue protein sequence, read N- to C-terminus: Parathyroid hormone 2 receptor (546 aa).

Residues 1–24 (MAWLETFTYICGWLILSSCLLVRA) form the signal peptide. The Extracellular portion of the chain corresponds to 27–143 (DSDGTITIEE…GKQEFFESLY (117 aa)). N51, N106, N116, and N121 each carry an N-linked (GlcNAc...) asparagine glycan. Residues 144–167 (ILYTVGYSISFGSLAVAILIIGYF) form a helical membrane-spanning segment. The Cytoplasmic segment spans residues 168-174 (RRLHCTR). A helical transmembrane segment spans residues 175 to 194 (NYIHLHLFVSFMLRAMSIFV). Residues 195 to 235 (KDRVAQAHLGVEALQSLVMQGDLQNFIGGPSVDKSQYVGCK) lie on the Extracellular side of the membrane. The helical transmembrane segment at 236 to 258 (IAVVMFIYFLATNYYWILVEGLY) threads the bilayer. Topologically, residues 259 to 273 (LHNLIFVSFFSDTKY) are cytoplasmic. Residues 274–295 (LWGFISIGWGFPAVFVVAWAVA) traverse the membrane as a helical segment. The Extracellular portion of the chain corresponds to 296-313 (RATLADTRCWELSAGDRW). A helical membrane pass occupies residues 314-334 (IYQAPILAAIGLNFILFLNTV). Topologically, residues 335-361 (RVLATKIWETNAVGHDMRKQYRKLAKS) are cytoplasmic. The helical transmembrane segment at 362-380 (TLVLVLVFGVHYIVFVCQP) threads the bilayer. Topologically, residues 381 to 391 (HSFSGLWWEIR) are extracellular. Residues 392–414 (MHCELFFNSFQGFFVSIVYCYCN) form a helical membrane-spanning segment. Topologically, residues 415 to 546 (GEVQAEVKKM…EGCKGETHPI (132 aa)) are cytoplasmic. The segment at 497-546 (SEQDCQTHSPPEETKEGHRRQGDDSPVMESSRPVAFTLDTEGCKGETHPI) is disordered. Basic and acidic residues-rich tracts occupy residues 506 to 519 (PPEE…RQGD) and 537 to 546 (EGCKGETHPI).

The protein belongs to the G-protein coupled receptor 2 family. Binds to TIPF39/TIP39.

It localises to the cell membrane. Its function is as follows. This is a specific receptor for parathyroid hormone. The activity of this receptor is mediated by G proteins which activate adenylyl cyclase. PTH2R may be responsible for PTH effects in a number of physiological systems. It may play a significant role in pancreatic function. PTH2R presence in neurons indicates that it may function as a neurotransmitter receptor. This Mus musculus (Mouse) protein is Parathyroid hormone 2 receptor (Pth2r).